Consider the following 89-residue polypeptide: Small ribosomal subunit protein uS15 (89 aa).

Residues 1 to 25 (MSLDTTEKQQLINTHQTHGTDTGSA) are disordered. Polar residues predominate over residues 8–25 (KQQLINTHQTHGTDTGSA).

The protein belongs to the universal ribosomal protein uS15 family. In terms of assembly, part of the 30S ribosomal subunit. Forms a bridge to the 50S subunit in the 70S ribosome, contacting the 23S rRNA.

In terms of biological role, one of the primary rRNA binding proteins, it binds directly to 16S rRNA where it helps nucleate assembly of the platform of the 30S subunit by binding and bridging several RNA helices of the 16S rRNA. Its function is as follows. Forms an intersubunit bridge (bridge B4) with the 23S rRNA of the 50S subunit in the ribosome. This Synechococcus sp. (strain CC9605) protein is Small ribosomal subunit protein uS15.